The sequence spans 59 residues: U-actitoxin-Aer2b (59 aa).

Contains 5 disulfide bonds.

The protein localises to the secreted. It is found in the nematocyst. The polypeptide is U-actitoxin-Aer2b (Anemonia erythraea (Sea anemone)).